We begin with the raw amino-acid sequence, 88 residues long: Large ribosomal subunit protein bL27 (88 aa).

Residues 1 to 23 (MAHKKGTGSTRNGRDSNSKRLGV) form a disordered region.

This sequence belongs to the bacterial ribosomal protein bL27 family.

This is Large ribosomal subunit protein bL27 from Synechococcus sp. (strain CC9902).